Consider the following 1857-residue polypeptide: Chitin synthase Y (1857 aa).

Positions 1-22 are disordered; sequence MVGPSPAGTVPSHAQSSLPSLP. The region spanning 1–788 is the Myosin motor domain; the sequence is MVGPSPAGTV…CWADLAKVGE (788 aa). ATP is bound at residue 102–109; that stretch reads GESGAGKT. The disordered stretch occupies residues 601–653; that stretch reads SSKPLRMPSMARRKASPASRLTFDAPTAEEPEDNESYGGSTAKSSGRRKSAMS. The N-linked (GlcNAc...) asparagine glycan is linked to asparagine 634. The tract at residues 668-692 is actin-binding; sequence LEIVNKCLSSPSLNPYFIFCLKPND. A run of 2 helical transmembrane segments spans residues 898–918 and 937–957; these read WMAI…RLFG and LIIW…PGLV. The 60-residue stretch at 961-1020 folds into the Cytochrome b5 heme-binding domain; sequence QHVYSAAELESHNGKNGHDSYIAIRGVVFDLDKFMPRHYPDIVPQSSLKKYAGMDATGLF. N-linked (GlcNAc...) asparagine glycans are attached at residues asparagine 1047 and asparagine 1072. A helical transmembrane segment spans residues 1209-1229; sequence FILAISILICAVVIFKFAAAL. Asparagine 1572 is a glycosylation site (N-linked (GlcNAc...) asparagine). The next 3 membrane-spanning stretches (helical) occupy residues 1603 to 1623, 1630 to 1650, and 1657 to 1677; these read LLST…IVWL, IPWT…LIFI, and MIGW…ALPF. Residues 1799–1854 enclose the DEK-C domain; the sequence is LPSDDAILAEIREILRTADLMTVTKKSIKQELERRFGVNLDAKRPYINSATEAVLS.

It in the N-terminal section; belongs to the TRAFAC class myosin-kinesin ATPase superfamily. Myosin family. This sequence in the C-terminal section; belongs to the chitin synthase family. Class V subfamily.

The protein resides in the cell membrane. It is found in the cell septum. The protein localises to the cell tip. It carries out the reaction [(1-&gt;4)-N-acetyl-beta-D-glucosaminyl](n) + UDP-N-acetyl-alpha-D-glucosamine = [(1-&gt;4)-N-acetyl-beta-D-glucosaminyl](n+1) + UDP + H(+). In terms of biological role, polymerizes chitin, a structural polymer of the cell wall and septum, by transferring the sugar moiety of UDP-GlcNAc to the non-reducing end of the growing chitin polymer. Specifically involved in hyphal elongation and new cell wall formation. The chain is Chitin synthase Y from Aspergillus oryzae (strain ATCC 42149 / RIB 40) (Yellow koji mold).